Reading from the N-terminus, the 904-residue chain is Toll-like receptor 3 (904 aa).

An N-terminal signal peptide occupies residues Met1–Ser23. Residues Ser24–Thr51 form the LRRNT domain. The Lumenal segment spans residues Ser24–Leu704. Cysteines 28 and 37 form a disulfide. Asn52, Asn57, and Asn70 each carry an N-linked (GlcNAc...) asparagine glycan. 6 LRR repeats span residues Asn52–Arg73, Gln76–Lys97, Met100–Phe121, Asn124–Lys145, Asn148–Val168, and Asn172–Ile193. A disulfide bridge links Cys95 with Cys122. An N-linked (GlcNAc...) asparagine glycan is attached at Asn124. Asn196 carries an N-linked (GlcNAc...) asparagine glycan. 2 LRR repeats span residues Ser198–Ala219 and Arg222–Glu244. Residues Asn247, Asn252, Asn265, Asn275, and Asn291 are each glycosylated (N-linked (GlcNAc...) asparagine). LRR repeat units lie at residues Ser249 to Gly270, Asn275 to Trp296, Gln299 to Gly320, Asn323 to Pro344, Cys356 to Gly377, Asn380 to Thr400, Pro408 to Trp429, His432 to Gly454, Tyr465 to Met486, Asn507 to Gly528, Lys531 to Gly552, His563 to Asp584, Glu587 to Asn608, and Ser611 to Pro632. Asn398 and Asn413 each carry an N-linked (GlcNAc...) asparagine glycan. Residue Asn507 is glycosylated (N-linked (GlcNAc...) asparagine). N-linked (GlcNAc...) asparagine glycans are attached at residues Asn636 and Asn662. The LRRCT domain occupies Asn645–Asp698. Intrachain disulfides connect Cys649-Cys677 and Cys651-Cys696. Residues Phe705–Phe725 traverse the membrane as a helical segment. At Glu726–His904 the chain is on the cytoplasmic side. The TIR domain occupies Phe754–Leu897. Residue Tyr759 is modified to Phosphotyrosine. Glycyl lysine isopeptide (Lys-Gly) (interchain with G-Cter in ubiquitin) cross-links involve residues Lys765, Lys812, and Lys831. At Tyr858 the chain carries Phosphotyrosine.

This sequence belongs to the Toll-like receptor family. Monomer and homodimer; dimerization is triggered by ligand-binding, the signaling unit is composed of one ds-RNA of around 40 bp and two TLR3 molecules, and lateral clustering of signaling units along the length of the ds-RNA ligand is required for TLR3 signal transduction. Interacts (via transmembrane domain) with UNC93B1; the interaction is required for transport from the ER to the endosomes. Interacts with SRC; upon binding of double-stranded RNA. Interacts with TICAM1 (via the TIR domain) in response to poly(I:C) and this interaction is enhanced in the presence of WDFY1. The tyrosine-phosphorylated form (via TIR domain) interacts with WDFY1 (via WD repeat 2) in response to poly(I:C). Heavily N-glycosylated, except on that part of the surface of the ectodomain that is involved in ligand binding. In terms of processing, TLR3 signaling requires a proteolytic cleavage mediated by cathepsins CTSB and CTSH, the cleavage occurs between amino acids 252 and 346. The cleaved form of TLR3 is the predominant form found in endosomes. Post-translationally, ubiquitinated by TRIM3; leading to recognition and sorting of polyubiquitinated TLR3 by the ESCRT complexes. Ubiquitinated by ZNRF1 via 'Lys-63'-linked ubiquitin chains; leading to TLR3 lysosomal trafficking and degradation. Ubiquitinated by RNF170 at Lys-765 via 'Lys-48'-linked ubiquitin chains; leading to TLR3 proteasomal degradation. In terms of tissue distribution, expressed at high level in placenta and pancreas. Also detected in CD11c+ immature dendritic cells. Only expressed in dendritic cells and not in other leukocytes, including monocyte precursors. TLR3 is the TLR that is expressed most strongly in the brain, especially in astrocytes, glia, and neurons.

It localises to the endoplasmic reticulum membrane. It is found in the endosome membrane. Its subcellular location is the early endosome. In terms of biological role, key component of innate and adaptive immunity. TLRs (Toll-like receptors) control host immune response against pathogens through recognition of molecular patterns specific to microorganisms. TLR3 is a nucleotide-sensing TLR which is activated by double-stranded RNA, a sign of viral infection. Acts via the adapter TRIF/TICAM1, leading to NF-kappa-B activation, IRF3 nuclear translocation, cytokine secretion and the inflammatory response. This chain is Toll-like receptor 3, found in Homo sapiens (Human).